The chain runs to 199 residues: Shikimate kinase (199 aa).

Residue glycine 12–threonine 17 participates in ATP binding. Serine 16 is a binding site for Mg(2+). 3 residues coordinate substrate: aspartate 34, arginine 58, and glycine 80. Arginine 117 provides a ligand contact to ATP. Arginine 136 provides a ligand contact to substrate. Residues valine 174–lysine 199 form a disordered region. Residues glycine 177–arginine 186 are compositionally biased toward basic and acidic residues.

Belongs to the shikimate kinase family. In terms of assembly, monomer. The cofactor is Mg(2+).

It is found in the cytoplasm. It catalyses the reaction shikimate + ATP = 3-phosphoshikimate + ADP + H(+). It functions in the pathway metabolic intermediate biosynthesis; chorismate biosynthesis; chorismate from D-erythrose 4-phosphate and phosphoenolpyruvate: step 5/7. Its function is as follows. Catalyzes the specific phosphorylation of the 3-hydroxyl group of shikimic acid using ATP as a cosubstrate. This is Shikimate kinase from Mycobacterium leprae (strain TN).